The primary structure comprises 333 residues: Cysteine protease (333 aa).

The signal sequence occupies residues M1 to C18. Residues K19–N108 constitute a propeptide, activation peptide. N-linked (GlcNAc...) asparagine glycosylation occurs at N93. 2 cysteine pairs are disulfide-bonded: C134–C182 and C168–C214. Residue C137 is part of the active site. Active-site residues include H281 and N301.

The protein belongs to the peptidase C1 family. As to quaternary structure, homodimer.

In terms of biological role, cysteine protease. The chain is Cysteine protease from Blomia tropicalis (Mite).